The chain runs to 290 residues: Hydroxyacylglutathione hydrolase-like protein (290 aa).

Residues H54, H56, D58, H59, H110, D134, and H172 each coordinate Zn(2+).

This sequence belongs to the metallo-beta-lactamase superfamily. Glyoxalase II family. The cofactor is Zn(2+).

In terms of biological role, hydrolase acting on ester bonds. The sequence is that of Hydroxyacylglutathione hydrolase-like protein (HAGHL) from Homo sapiens (Human).